A 1069-amino-acid polypeptide reads, in one-letter code: Adenylate-forming reductase (1069 aa).

The interval 20–391 is adenylation (A) domain; the sequence is HPEDPKAVKS…WKLRQDINYR (372 aa). AMP is bound by residues His262, 357–358, Thr362, and 437–440; these read AH and AVGR. Residues 576 to 656 form the Carrier domain; sequence DSLEEDLKDL…KLGASLRHLA (81 aa). Ser612 carries the O-(pantetheine 4'-phosphoryl)serine modification. The reductase (R) domain stretch occupies residues 686–1032; sequence TVLLTGSTGN…TGKVILDTSR (347 aa). NADP(+)-binding positions include 693 to 696, Arg719, 785 to 787, Tyr863, and Lys867; these read TGNL and NAW.

This sequence belongs to the adenylate-forming reductase family.

It carries out the reaction 5-methylorsellinate + ATP + NADPH + H(+) = 2,4-dihydroxy 5,6-dimethylbenzaldehyde + AMP + diphosphate + NADP(+). The protein operates within secondary metabolite biosynthesis. Functionally, non-canonical non-ribosomal peptide synthetase; part of the cluster A that mediates the biosynthesis of azasperpyranones, members of the azaphilone family that exhibit anti-cancer activities. Azasperpyranones are synthesized by 2 clusters, A and B. Cluster A is responsible for the production of the polyhydric phenol moiety while the azaphilonoid scaffold is produced by the cluster B. The non-reducing polyketide synthase ATEG_03629 produces 5-methyl orsellinic acid, which is then reduced to 5-methyl orsellinic aldehyde by the NRPS-like protein ATEG_03630. 5-methyl orsellinic aldehyde is then first hydroxylated by the FAD-dependent monooxygenase ATEG_03635 and subsequently hydroxylated by the cytochrome P450 monooxygenase ATEG_03631 to produce the unstable polyhydric phenol precursor of azasperpyranones. On the other hand, the polyketide synthase ATEG_07659 is responsible for producing the 3,5-dimethyloctadienone moiety from acetyl-CoA, three malonyl-CoA, and two S-adenosyl methionines (SAM). The 3,5-dimethyloctadienone moiety is then loaded onto the SAT domain of ATEG_07661 and extended with four malonyl-CoA and one SAM, which leads to the formation of 2,4-dihydroxy-6-(5,7-dimethyl-2-oxo-trans-3-trans-5-nonadienyl)-3-methylbenzaldehyde (compound 8) after reductive release and aldol condensation. The FAD-dependent monooxygenase ATEG_07662 is the next enzyme in the biosynthesis sequence and hydroxylates the side chain at the benzylic position of compound 8. In Aspergillus nidulans, afoF, the ortholog of the FAD-dependent oxygenase ATEG_07660, is the key enzyme for the biosynthesis of asperfuranone by catalyzing the hydroxylation at C-8 of to prevent the formation of a six-membered ring hemiacetal intermediate and thus facilitating the formation of a five-membered ring to produce asperfuranone. In Aspergillus terreus, ATEG_07660 is probably not functional, which leads to the formation of the six-membered ring hemiacetal intermediate presperpyranone instead of asperfuranone. Finally, ATEG_03636 is involved in the condensation of the polyhydric phenol moiety produced by cluster A and the perasperpyranone precursor produced by cluster B, to yield azasperpyranone A. Further modifications of azasperpyranone A result in the production of derivatives, including azasperpyranone B to F. The sequence is that of Adenylate-forming reductase from Aspergillus terreus (strain NIH 2624 / FGSC A1156).